The primary structure comprises 305 residues: Dihydroorotate dehydrogenase B (NAD(+)), catalytic subunit (305 aa).

FMN-binding positions include Ser23 and 47-48; that span reads KG. Substrate-binding positions include Lys47 and 71–75; that span reads NAIGL. Positions 101 and 129 each coordinate FMN. Substrate is bound at residue Asn129. Cys132 functions as the Nucleophile in the catalytic mechanism. Residues Lys167 and Ile193 each coordinate FMN. 194–195 serves as a coordination point for substrate; it reads NT. FMN-binding positions include Gly219, 245–246, and 267–268; these read GG and GT.

This sequence belongs to the dihydroorotate dehydrogenase family. Type 1 subfamily. Heterotetramer of 2 PyrK and 2 PyrD type B subunits. It depends on FMN as a cofactor.

It localises to the cytoplasm. It carries out the reaction (S)-dihydroorotate + NAD(+) = orotate + NADH + H(+). It functions in the pathway pyrimidine metabolism; UMP biosynthesis via de novo pathway; orotate from (S)-dihydroorotate (NAD(+) route): step 1/1. In terms of biological role, catalyzes the conversion of dihydroorotate to orotate with NAD(+) as electron acceptor. The protein is Dihydroorotate dehydrogenase B (NAD(+)), catalytic subunit (pyrD) of Geotalea daltonii (strain DSM 22248 / JCM 15807 / FRC-32) (Geobacter daltonii).